Here is a 428-residue protein sequence, read N- to C-terminus: D-inositol 3-phosphate glycosyltransferase (428 aa).

His17 lines the 1D-myo-inositol 3-phosphate pocket. UDP-N-acetyl-alpha-D-glucosamine contacts are provided by residues 23 to 24 (QP) and Gly31. 1D-myo-inositol 3-phosphate is bound by residues 28-33 (DAGGMN), Arg86, Tyr119, Thr143, and Arg163. UDP-N-acetyl-alpha-D-glucosamine contacts are provided by Arg237 and Lys242. Residues Tyr312, Arg313, and Ala315 each coordinate Mg(2+). Positions 325 and 333 each coordinate UDP-N-acetyl-alpha-D-glucosamine. Thr339 serves as a coordination point for Mg(2+).

Belongs to the glycosyltransferase group 1 family. MshA subfamily. As to quaternary structure, homodimer.

The enzyme catalyses 1D-myo-inositol 3-phosphate + UDP-N-acetyl-alpha-D-glucosamine = 1D-myo-inositol 2-acetamido-2-deoxy-alpha-D-glucopyranoside 3-phosphate + UDP + H(+). Catalyzes the transfer of a N-acetyl-glucosamine moiety to 1D-myo-inositol 3-phosphate to produce 1D-myo-inositol 2-acetamido-2-deoxy-glucopyranoside 3-phosphate in the mycothiol biosynthesis pathway. The sequence is that of D-inositol 3-phosphate glycosyltransferase from Thermobispora bispora (strain ATCC 19993 / DSM 43833 / CBS 139.67 / JCM 10125 / KCTC 9307 / NBRC 14880 / R51).